The following is a 491-amino-acid chain: Ketol-acid reductoisomerase (NADP(+)) (491 aa).

A KARI N-terminal Rossmann domain is found at 15–208 (AQLGKCRFMG…GGHRAGVLES (194 aa)). NADP(+) is bound by residues 45–48 (CGAQ), Arg-68, Arg-76, Ser-78, and 108–110 (DKQ). Residue His-132 is part of the active site. An NADP(+)-binding site is contributed by Gly-158. KARI C-terminal knotted domains lie at 209–344 (SFVA…TAPQ) and 345–484 (YEGK…MTDM). Positions 217, 221, 389, and 393 each coordinate Mg(2+). Ser-414 is a substrate binding site.

This sequence belongs to the ketol-acid reductoisomerase family. Requires Mg(2+) as cofactor.

The enzyme catalyses (2R)-2,3-dihydroxy-3-methylbutanoate + NADP(+) = (2S)-2-acetolactate + NADPH + H(+). The catalysed reaction is (2R,3R)-2,3-dihydroxy-3-methylpentanoate + NADP(+) = (S)-2-ethyl-2-hydroxy-3-oxobutanoate + NADPH + H(+). Its pathway is amino-acid biosynthesis; L-isoleucine biosynthesis; L-isoleucine from 2-oxobutanoate: step 2/4. It participates in amino-acid biosynthesis; L-valine biosynthesis; L-valine from pyruvate: step 2/4. Its function is as follows. Involved in the biosynthesis of branched-chain amino acids (BCAA). Catalyzes an alkyl-migration followed by a ketol-acid reduction of (S)-2-acetolactate (S2AL) to yield (R)-2,3-dihydroxy-isovalerate. In the isomerase reaction, S2AL is rearranged via a Mg-dependent methyl migration to produce 3-hydroxy-3-methyl-2-ketobutyrate (HMKB). In the reductase reaction, this 2-ketoacid undergoes a metal-dependent reduction by NADPH to yield (R)-2,3-dihydroxy-isovalerate. The chain is Ketol-acid reductoisomerase (NADP(+)) from Escherichia coli O157:H7.